The primary structure comprises 992 residues: Vacuolar membrane protease (992 aa).

Over 1–24 (MSPAMANPRVRKFNPIAFTPLPVT) the chain is Cytoplasmic. Residues 25-45 (FITTIVYLAVLILVLVTYLVV) traverse the membrane as a helical segment. Residues 46–390 (PPAPTLEMSP…SAFAVFRLHT (345 aa)) are Vacuolar-facing. Asn-59, Asn-115, and Asn-118 each carry an N-linked (GlcNAc...) asparagine glycan. Zn(2+) is bound by residues His-174 and Asp-186. Glu-220 (proton acceptor) is an active-site residue. Residue Glu-221 participates in Zn(2+) binding. N-linked (GlcNAc...) asparagine glycosylation occurs at Asn-237. Positions 246 and 319 each coordinate Zn(2+). A helical transmembrane segment spans residues 391–411 (LFALSVTLLVIGPLVLFITSI). The Cytoplasmic portion of the chain corresponds to 412 to 446 (ALSKTDRMYLFSMSKSLGGASETVSLRGLRGLFRT). A helical transmembrane segment spans residues 447-467 (PIILTVTTVIPIGLAYLLEKI). The Vacuolar portion of the chain corresponds to 468–474 (NPYIVHS). A helical transmembrane segment spans residues 475–495 (SQFAVWSMMLSVWIFVAWFLA). Topologically, residues 496 to 508 (RVADFFRPSALHR) are cytoplasmic. Residues 509-529 (AYSYTWIFIVTWIMLVISTVY) form a helical membrane-spanning segment. The Vacuolar portion of the chain corresponds to 530 to 533 (ANQK). A helical membrane pass occupies residues 534 to 554 (GIAAGYFTFFYFAAVFLATWV). Residues 555-671 (SYLELFSLPR…WSWTLPRWTW (117 aa)) are Cytoplasmic-facing. The interval 579 to 620 (RSSSLSSRLLTPSADELPSDIGPNGAENVGDPDETDPTESTS) is disordered. The chain crosses the membrane as a helical span at residues 672 to 692 (ILQLLLLAPIVIILVGQVGLL). At 693–708 (LTTAMSQIGSDGVSTF) the chain is on the vacuolar side. The chain crosses the membrane as a helical span at residues 709 to 729 (IVYLACALFSTLLFAPLLPFI). At 730–736 (HRFTYHV) the chain is on the cytoplasmic side. A helical membrane pass occupies residues 737–757 (PTFLLLIFIGTLIYNLVAFPF). Topologically, residues 758–992 (SPANRLKIFF…VEASHDFIIQ (235 aa)) are vacuolar. N-linked (GlcNAc...) asparagine glycans are attached at residues Asn-805, Asn-846, and Asn-954.

Belongs to the peptidase M28 family. Zn(2+) is required as a cofactor.

The protein localises to the vacuole membrane. Its function is as follows. May be involved in vacuolar sorting and osmoregulation. The chain is Vacuolar membrane protease from Paracoccidioides brasiliensis (strain Pb03).